Reading from the N-terminus, the 335-residue chain is Dihydroorotate dehydrogenase (quinone) (335 aa).

FMN-binding positions include 58–62 and Thr82; that span reads AGADK. Lys62 serves as a coordination point for substrate. 107–111 provides a ligand contact to substrate; sequence NRNGF. Residues Asn135 and Asn168 each coordinate FMN. A substrate-binding site is contributed by Asn168. Ser171 (nucleophile) is an active-site residue. Asn173 lines the substrate pocket. Positions 213 and 241 each coordinate FMN. 242–243 contacts substrate; that stretch reads NT. Residues Gly264, Gly293, and 314-315 each bind FMN; that span reads YS.

The protein belongs to the dihydroorotate dehydrogenase family. Type 2 subfamily. In terms of assembly, monomer. FMN serves as cofactor.

Its subcellular location is the cell membrane. The enzyme catalyses (S)-dihydroorotate + a quinone = orotate + a quinol. It functions in the pathway pyrimidine metabolism; UMP biosynthesis via de novo pathway; orotate from (S)-dihydroorotate (quinone route): step 1/1. In terms of biological role, catalyzes the conversion of dihydroorotate to orotate with quinone as electron acceptor. The sequence is that of Dihydroorotate dehydrogenase (quinone) from Haemophilus ducreyi (strain 35000HP / ATCC 700724).